Here is a 514-residue protein sequence, read N- to C-terminus: MKTLLVLRISTVILVVLVIQKSYADILECDYFDTVDISAAQKLQNGSYLFEGLLVPAILTGEYDFRILPDDSKQKVARHIRGCVCKLKPCVRFCCPHDHIMDNGVCYDNMSDEELAELDPFLNVTLDDGSVSRRHFKNELIVQWDLPMPCDGMFYLDNREEQDKYTLFENGTFFRHFDRVTLRKREYCLQHLTFADGNATSIRIAPHNCLIVPSITGQTVVMISSLICMVLTIAVYLFVKKLQNLHGKCFICYMVCLFMGYLFLLLDLWQISISFCKPAGFLGYFFVMAAFFWLSVISLHLWNTFRGSSHKANRFLFEHRFLAYNTYAWGMAVVLTGITVLADNIVENQDWNPRVGHEGHCWIYTQAWSAMLYFYGPMVFLIAFNITMFILTAKRILGVKKDIQNFAHRQERKQKLNSDKQTYTFFLRLFIIMGLSWSLEIGSYFSQSNQTWANVFLVADYLNWSQGIIIFILFVLKRSTWRLLQESIRGEGEEVNNSEEEISLENTTTRNVLL.

Positions Met1 to Ala24 are cleaved as a signal peptide. At Asp25–Gln218 the chain is on the extracellular side. 5 cysteine pairs are disulfide-bonded: Cys29–Cys83, Cys85–Cys90, Cys94–Cys188, Cys95–Cys106, and Cys150–Cys209. Asn45 is a glycosylation site (N-linked (GlcNAc...) asparagine). N-linked (GlcNAc...) asparagine glycosylation is found at Asn109, Asn123, Asn170, and Asn198. Residues Thr219 to Val239 traverse the membrane as a helical segment. Residues Lys240–Lys248 are Cytoplasmic-facing. Residues Cys249–Trp269 traverse the membrane as a helical segment. At Gln270–Pro278 the chain is on the extracellular side. The helical transmembrane segment at Ala279–Leu299 threads the bilayer. The Cytoplasmic portion of the chain corresponds to His300–Arg320. A helical transmembrane segment spans residues Phe321 to Leu341. Residues Ala342–Ala370 lie on the Extracellular side of the membrane. A helical transmembrane segment spans residues Met371 to Leu391. The Cytoplasmic portion of the chain corresponds to Thr392–Thr424. A helical membrane pass occupies residues Phe425–Phe445. Over Ser446 to Asn454 the chain is Extracellular. N-linked (GlcNAc...) asparagine glycosylation is present at Asn449. The chain crosses the membrane as a helical span at residues Val455–Val475. Topologically, residues Leu476 to Leu514 are cytoplasmic.

This sequence belongs to the G-protein coupled receptor 2 family. Mth subfamily. As to quaternary structure, homodimer.

Its subcellular location is the cell membrane. Its function is as follows. Involved in biological aging and stress response. Essential for adult survival. Required in the presynaptic motor neuron to up-regulate neurotransmitter exocytosis at larval glutamatergic neuromuscular junctions (NMJs). Regulates a step associated with docking and clustering of vesicles at release sites. SP/Acp70A and sun are agonists that activate mth in vitro. The sequence is that of G-protein coupled receptor Mth (mth) from Drosophila melanogaster (Fruit fly).